The primary structure comprises 790 residues: Chorion peroxidase (790 aa).

The first 16 residues, 1-16, serve as a signal peptide directing secretion; sequence MAKKVLLLSLYSAVLS. Residues 17–209 constitute a propeptide that is removed on maturation; that stretch reads TWFGFGYVQC…ARIPRAIRKR (193 aa). At C210 the chain carries N-acetylcysteine; in Chorion peroxidase light chain. C216 and C229 are joined by a disulfide. W259 carries an N-linked (Man) tryptophan glycan. The active-site Proton acceptor is H305. N327 carries an N-linked (GlcNAc...) asparagine glycan. Y353 bears the 3',4'-dihydroxyphenylalanine mark. C433 and C440 are joined by a disulfide. A glycan (N-linked (Man) tryptophan) is linked at W479. Heme b is bound at residue H551. W680 carries N-linked (Man) tryptophan glycosylation. C746 and C774 are disulfide-bonded. N-linked (Man) tryptophan glycosylation is present at W785.

The protein belongs to the peroxidase family. XPO subfamily. In terms of assembly, heterodimer. Requires heme b as cofactor. N-glycosylated on Trp by mannose and on Asn by N-acetylglucosamine. Post-translationally, there is a hexose glycosylation of an unidentified residue between 654 and 708; Trp-680 is conserved in closely related species and is probably mannosylated.

It localises to the secreted. It catalyses the reaction 2 a phenolic donor + H2O2 = 2 a phenolic radical donor + 2 H2O. Its activity is regulated as follows. Extremely resistant to denaturating agents, such as SDS and organic solvents. Its function is as follows. Involved in the formation of a rigid and insoluble egg chorion by catalyzing chorion protein cross-linking through dityrosine formation and phenol oxidase-catalyzed chorion melanization. In Aedes aegypti (Yellowfever mosquito), this protein is Chorion peroxidase (pxt).